Reading from the N-terminus, the 296-residue chain is D-alanine--D-alanine ligase (296 aa).

Residues 103 to 293 (KEILMHHRMP…FDSFVKRIIE (191 aa)) enclose the ATP-grasp domain. 129–180 (ISFPVAVKPSSGGSSIATFKVKSIQELKHAYEEASKYGEVMIEQWVTGKEIT) lines the ATP pocket. Mg(2+)-binding residues include Asp-247, Glu-260, and Asn-262.

This sequence belongs to the D-alanine--D-alanine ligase family. Mg(2+) serves as cofactor. It depends on Mn(2+) as a cofactor.

The protein localises to the cytoplasm. The enzyme catalyses 2 D-alanine + ATP = D-alanyl-D-alanine + ADP + phosphate + H(+). The protein operates within cell wall biogenesis; peptidoglycan biosynthesis. Cell wall formation. The protein is D-alanine--D-alanine ligase of Francisella tularensis subsp. novicida (strain U112).